The sequence spans 231 residues: Very-long-chain (3R)-3-hydroxyacyl-CoA dehydratase 4 (231 aa).

Residues 1–19 are Cytoplasmic-facing; it reads MGPVALPTWLQPRYRKNAY. The chain crosses the membrane as a helical span at residues 20–40; it reads LFIYYLIQFCGHSWIFTNMTV. Over 41 to 56 the chain is Lumenal; that stretch reads RFFSFGKDSMVDTFYA. A helical transmembrane segment spans residues 57 to 77; sequence IGLVMQLCQSISLLELLHIYV. The Cytoplasmic portion of the chain corresponds to 78 to 112; the sequence is GIESNHLLPRILQLTERIIVLFMVITSQEEVQEKY. The chain crosses the membrane as a helical span at residues 113 to 133; it reads VVCVLFIFRNLLDMVRYTYSM. Over 134-135 the chain is Lumenal; that stretch reads LS. The helical transmembrane segment at 136–156 threads the bilayer; sequence VIGISYAVLTWFSQTLWMPIY. Residue Tyr-156 is part of the active site. Residue Pro-157 is a topological domain, cytoplasmic. A helical membrane pass occupies residues 158–178; that stretch reads LCVLAEAFTIYQSLPYFESFG. Glu-163 is an active-site residue. At 179 to 189 the chain is on the lumenal side; the sequence is TYSTKLPFDLS. The helical transmembrane segment at 190 to 210 threads the bilayer; that stretch reads FYFPYVLKIYLMMLFVGMYFT. Over 211 to 231 the chain is Cytoplasmic; sequence YNHLYSERRDILRVFPNKKKM.

The protein belongs to the very long-chain fatty acids dehydratase HACD family. May interact with enzymes of the ELO family (including ELOVL1); with those enzymes that mediate condensation, the first of the four steps of the reaction cycle responsible for fatty acids elongation, may be part of a larger fatty acids elongase complex.

It is found in the endoplasmic reticulum membrane. The enzyme catalyses a very-long-chain (3R)-3-hydroxyacyl-CoA = a very-long-chain (2E)-enoyl-CoA + H2O. It carries out the reaction (3R)-hydroxyhexadecanoyl-CoA = (2E)-hexadecenoyl-CoA + H2O. Its pathway is lipid metabolism; fatty acid biosynthesis. Its function is as follows. Catalyzes the third of the four reactions of the long-chain fatty acids elongation cycle. This endoplasmic reticulum-bound enzymatic process, allows the addition of two carbons to the chain of long- and very long-chain fatty acids/VLCFAs per cycle. This enzyme catalyzes the dehydration of the 3-hydroxyacyl-CoA intermediate into trans-2,3-enoyl-CoA, within each cycle of fatty acid elongation. Thereby, it participates in the production of VLCFAs of different chain lengths that are involved in multiple biological processes as precursors of membrane lipids and lipid mediators. In Bos taurus (Bovine), this protein is Very-long-chain (3R)-3-hydroxyacyl-CoA dehydratase 4.